The chain runs to 432 residues: Enolase (432 aa).

A (2R)-2-phosphoglycerate-binding site is contributed by Gln163. Glu205 serves as the catalytic Proton donor. Asp242, Glu287, and Asp314 together coordinate Mg(2+). Residues Lys339, Arg368, Ser369, and Lys390 each coordinate (2R)-2-phosphoglycerate. The Proton acceptor role is filled by Lys339.

Belongs to the enolase family. Mg(2+) serves as cofactor.

Its subcellular location is the cytoplasm. It is found in the secreted. It localises to the cell surface. It catalyses the reaction (2R)-2-phosphoglycerate = phosphoenolpyruvate + H2O. The protein operates within carbohydrate degradation; glycolysis; pyruvate from D-glyceraldehyde 3-phosphate: step 4/5. Functionally, catalyzes the reversible conversion of 2-phosphoglycerate (2-PG) into phosphoenolpyruvate (PEP). It is essential for the degradation of carbohydrates via glycolysis. The polypeptide is Enolase (Myxococcus xanthus (strain DK1622)).